The chain runs to 129 residues: ALK and LTK ligand 1 (129 aa).

Positions 1-27 are cleaved as a signal peptide; the sequence is MRPLKPGAPLPALFLLALALSPHGAHG. The segment at 24–63 is disordered; it reads GAHGRPRGRRGARVTDKEPKPLLFLPAAGAGRTPSGSRSA. Residues 25–35 show a composition bias toward basic residues; it reads AHGRPRGRRGA. 2 cysteine pairs are disulfide-bonded: C90–C126 and C104–C113.

The protein belongs to the ALKAL family. As to expression, widely expressed with highest levels in thyroid and moderate levels in stomach, trachea, small intestine, prostate and brain.

The protein localises to the secreted. It is found in the cell membrane. Cytokine that acts as a physiological ligand for receptor tyrosine kinase LTK, leading to its activation. Monomeric ALKAL1 binds to LTK, leading to LTK homodimerization and activation. In contrast to ALKAL2, does not act as a potent physiological ligand for ALK. In Homo sapiens (Human), this protein is ALK and LTK ligand 1.